The chain runs to 408 residues: G2/mitotic-specific cyclin-B (408 aa).

The protein belongs to the cyclin family. Cyclin AB subfamily. In terms of assembly, interacts with the CDC2 protein kinase to form a serine/threonine kinase holoenzyme complex also known as maturation promoting factor (MPF). The cyclin subunit imparts substrate specificity to the complex.

In terms of biological role, essential for the control of the cell cycle at the G2/M (mitosis) transition. The chain is G2/mitotic-specific cyclin-B from Patella vulgata (Common limpet).